The primary structure comprises 189 residues: Putative manganese efflux pump MntP (189 aa).

6 helical membrane passes run 3–23, 41–61, 65–85, 106–128, 141–161, and 168–188; these read PVSLIFLAFAMSTDAFAAAIG, IIFGVIEAITPLVGWLLGQAA, VADWDHWIAFVLLVLLGLHMI, WILAVTALATSIDALAVGVGLAF, GLATMTMVTLGTMLGRALGAV, and MVGGVVLILVGATILYEHLSA.

This sequence belongs to the MntP (TC 9.B.29) family.

It localises to the cell inner membrane. In terms of biological role, probably functions as a manganese efflux pump. This Pseudomonas aeruginosa (strain LESB58) protein is Putative manganese efflux pump MntP.